Here is a 444-residue protein sequence, read N- to C-terminus: Cerebral cavernous malformations 2 protein (444 aa).

The disordered stretch occupies residues 1–37 (MEEEGKKGKKPGIVSPFKRVFLKGEKSRDKKAHEKVT). At serine 15 the chain carries Phosphoserine. Basic and acidic residues predominate over residues 22-37 (LKGEKSRDKKAHEKVT). The 190-residue stretch at 59 to 248 (LSDYIEKEVK…TPTHHLSLHS (190 aa)) folds into the PID domain. Phosphoserine is present on serine 164. Positions 283-376 (SKTISESELS…NFLETIGVKD (94 aa)) are harmonin homology domain. Serine 384 and serine 393 each carry phosphoserine. Residues 391 to 423 (ALSTTSSSTTNGNRATGSSDDRSAPSEGDEWDR) form a disordered region. Over residues 392-408 (LSTTSSSTTNGNRATGS) the composition is skewed to low complexity. At threonine 394 the chain carries Phosphothreonine. Phosphoserine is present on serine 396. Threonine 399 is subject to Phosphothreonine.

The protein belongs to the CCM2 family. In terms of assembly, part of a complex with MAP2K3, MAP3K3 and RAC1. Binds RAC1 directly and independently of its nucleotide-bound state. Interacts with HEG1 and KRIT1; KRIT1 greatly facilitates the interaction with HEG1. Interacts with PDCD10.

Its subcellular location is the cytoplasm. Functionally, component of the CCM signaling pathway which is a crucial regulator of heart and vessel formation and integrity. May act through the stabilization of endothelial cell junctions. May function as a scaffold protein for MAP2K3-MAP3K3 signaling. Seems to play a major role in the modulation of MAP3K3-dependent p38 activation induced by hyperosmotic shock. The polypeptide is Cerebral cavernous malformations 2 protein (CCM2) (Homo sapiens (Human)).